The sequence spans 424 residues: Glutamyl-tRNA reductase (424 aa).

Substrate contacts are provided by residues 49-52 (TCNR), Ser109, 114-116 (EDQ), and Gln120. The active-site Nucleophile is Cys50. Position 189–194 (189–194 (GFGKMS)) interacts with NADP(+).

It belongs to the glutamyl-tRNA reductase family. As to quaternary structure, homodimer.

The catalysed reaction is (S)-4-amino-5-oxopentanoate + tRNA(Glu) + NADP(+) = L-glutamyl-tRNA(Glu) + NADPH + H(+). It functions in the pathway porphyrin-containing compound metabolism; protoporphyrin-IX biosynthesis; 5-aminolevulinate from L-glutamyl-tRNA(Glu): step 1/2. In terms of biological role, catalyzes the NADPH-dependent reduction of glutamyl-tRNA(Glu) to glutamate 1-semialdehyde (GSA). This Alkaliphilus metalliredigens (strain QYMF) protein is Glutamyl-tRNA reductase.